A 93-amino-acid chain; its full sequence is Secretoglobin family 3A member 2 (93 aa).

The first 21 residues, 1–21 (MKLVTIFLLVTISLCSYSATA), serve as a signal peptide directing secretion.

This sequence belongs to the secretoglobin family. UGRP subfamily. As to quaternary structure, homodimer; disulfide-linked. Monomer. Interacts with APOA1. In terms of tissue distribution, highly expressed in lung and trachea. Detected throughout the airway epithelium in lung, with slightly higher expression in large airways. Found in lung submucosal gland acinus where it localizes to serous-like cells. Probably expressed in club cells of the bronchioles. Not detected in other tissues tested.

The protein resides in the secreted. Functionally, secreted cytokine-like protein. Binds to the scavenger receptor MARCO. Can also bind to pathogens including the Gram-positive bacterium L.monocytogenes, the Gram-negative bacterium P.aeruginosa, and yeast. Strongly inhibits phospholipase A2 (PLA2G1B) activity. Seems to have anti-inflammatory effects in respiratory epithelium. Also has anti-fibrotic activity in lung. May play a role in fetal lung development and maturation. Promotes branching morphogenesis during early stages of lung development. In the pituitary, may inhibit production of follicle-stimulating hormone (FSH) and luteinizing hormone (LH). The chain is Secretoglobin family 3A member 2 (SCGB3A2) from Homo sapiens (Human).